We begin with the raw amino-acid sequence, 81 residues long: Serine protease inhibitor Kazal-type 2 (81 aa).

The signal sequence occupies residues 1 to 21 (MALAVLRLALLLLAVTFAGPL). A Kazal-like domain is found at 27–81 (KYKTPFCARYQLPGCPRDFNPVCGTDMITYPNECTLCMKIRESGQNIKILRRGPC). 3 disulfide bridges follow: Cys-33–Cys-63, Cys-41–Cys-60, and Cys-49–Cys-81.

In terms of tissue distribution, more abundant in epididymis than in testis.

The protein resides in the secreted. It is found in the cytoplasmic vesicle. It localises to the secretory vesicle. The protein localises to the acrosome. Its function is as follows. Strong inhibitor of acrosin in male and/or female genital tract. Also inhibits trypsin. In terms of biological role, as a strong inhibitor of acrosin, it is required for normal spermiogenesis. It probably hinders premature activation of proacrosin and other proteases, thus preventing the cascade of events leading to spermiogenesis defects. May be involved in the regulation of serine protease-dependent germ cell apoptosis. It also inhibits trypsin. The chain is Serine protease inhibitor Kazal-type 2 (SPINK2) from Macaca fascicularis (Crab-eating macaque).